The following is a 364-amino-acid chain: Putative [LysW]-aminoadipate semialdehyde/glutamate semialdehyde transaminase (364 aa).

Pyridoxal 5'-phosphate contacts are provided by residues 90–91 and F117; that span reads GT. R120 is a substrate binding site. 202–205 lines the pyridoxal 5'-phosphate pocket; that stretch reads DEVQ. An N6-(pyridoxal phosphate)lysine modification is found at K230. S254 serves as a coordination point for substrate. A pyridoxal 5'-phosphate-binding site is contributed by T255.

It belongs to the class-III pyridoxal-phosphate-dependent aminotransferase family. LysJ subfamily. In terms of assembly, homodimer. Pyridoxal 5'-phosphate serves as cofactor.

Its subcellular location is the cytoplasm. The catalysed reaction is [amino-group carrier protein]-C-terminal-gamma-(L-lysyl)-L-glutamate + 2-oxoglutarate = [amino-group carrier protein]-C-terminal-N-(1-carboxy-5-oxopentan-1-yl)-L-glutamine + L-glutamate. It carries out the reaction [amino-group carrier protein]-C-terminal-gamma-(L-ornithyl)-L-glutamate + 2-oxoglutarate = [amino-group carrier protein]-C-terminal-gamma-(L-glutamyl-5-semialdehyde)-L-glutamate + L-glutamate. It participates in amino-acid biosynthesis; L-lysine biosynthesis via AAA pathway; L-lysine from L-alpha-aminoadipate (Thermus route): step 4/5. It functions in the pathway amino-acid biosynthesis; L-arginine biosynthesis. Its function is as follows. Involved in both the arginine and lysine biosynthetic pathways. The chain is Putative [LysW]-aminoadipate semialdehyde/glutamate semialdehyde transaminase from Pyrococcus abyssi (strain GE5 / Orsay).